Here is a 993-residue protein sequence, read N- to C-terminus: Ephrin type-B receptor 3 (993 aa).

The first 29 residues, 1-29 (MAGARPPPGLLPLLAPLLLPLLLPAGCWA), serve as a signal peptide directing secretion. Residues 30 to 554 (LEETLMDTKW…AQQLQEQLPL (525 aa)) are Extracellular-facing. An Eph LBD domain is found at 31-209 (EETLMDTKWV…FYKKCASTTA (179 aa)). Cysteine 73 and cysteine 191 are joined by a disulfide. Fibronectin type-III domains lie at 331–446 (VPSP…TNQA) and 447–540 (APSE…TTSE). Residues asparagine 343 and asparagine 440 are each glycosylated (N-linked (GlcNAc...) asparagine). The helical transmembrane segment at 555 to 575 (IVGSTVAGFVFMVVVVVIALV) threads the bilayer. Topologically, residues 576–993 (CLRKQRHGPD…QMNQTLPVQV (418 aa)) are cytoplasmic. Tyrosine 609 carries the post-translational modification Phosphotyrosine; by autocatalysis. Residues 628–891 (VKIEEVIGAG…QIVNTLDKLI (264 aa)) form the Protein kinase domain. Residues 634 to 642 (IGAGEFGEV) and lysine 660 each bind ATP. Aspartate 753 acts as the Proton acceptor in catalysis. An SAM domain is found at 920–984 (TTFTTVGDWL…LCSIQDMRLQ (65 aa)). The PDZ-binding signature appears at 991 to 993 (VQV).

It belongs to the protein kinase superfamily. Tyr protein kinase family. Ephrin receptor subfamily. Heterotetramer upon binding of the ligand. The heterotetramer is composed of an ephrin dimer and a receptor dimer. Oligomerization is probably required to induce biological responses. Phosphorylated. Autophosphorylates upon ligand-binding. Autophosphorylation on Tyr-609 is required for interaction with SH2 domain-containing proteins. In terms of processing, ubiquitinated by RNF186, mainly through 'Lys-48' and 'Lys-63'-linked polyubiquitin chains. In terms of tissue distribution, expressed in cells of the retinal ganglion cell layer during retinal axon guidance to the optic disk. Expressed by Paneth and progenitor cells in the crypts of the intestinal epithelium (at protein level). Expressed in myogenic progenitor cells.

It is found in the cell membrane. The protein localises to the cell projection. The protein resides in the dendrite. It catalyses the reaction L-tyrosyl-[protein] + ATP = O-phospho-L-tyrosyl-[protein] + ADP + H(+). Its function is as follows. Receptor tyrosine kinase which binds promiscuously transmembrane ephrin-B family ligands residing on adjacent cells, leading to contact-dependent bidirectional signaling into neighboring cells. The signaling pathway downstream of the receptor is referred to as forward signaling while the signaling pathway downstream of the ephrin ligand is referred to as reverse signaling. Generally has an overlapping and redundant function with EPHB2. Like EPHB2, functions in axon guidance during development regulating for instance the neurons forming the corpus callosum and the anterior commissure, 2 major interhemispheric connections between the temporal lobes of the cerebral cortex. In addition to its role in axon guidance also plays an important redundant role with other ephrin-B receptors in development and maturation of dendritic spines and the formation of excitatory synapses. Controls other aspects of development through regulation of cell migration and positioning. This includes angiogenesis, palate development and thymic epithelium development for instance. Forward and reverse signaling through the EFNB2/EPHB3 complex also regulate migration and adhesion of cells that tubularize the urethra and septate the cloaca. Finally, plays an important role in intestinal epithelium differentiation segregating progenitor from differentiated cells in the crypt. This Mus musculus (Mouse) protein is Ephrin type-B receptor 3 (Ephb3).